Reading from the N-terminus, the 614-residue chain is V-type proton ATPase catalytic subunit A isoform 1 (614 aa).

247-254 (GAFGCGKT) serves as a coordination point for ATP.

Belongs to the ATPase alpha/beta chains family. As to quaternary structure, V-ATPase is a heteromultimeric enzyme made up of two complexes: the ATP-hydrolytic V1 complex and the proton translocation V0 complex. The V1 complex consists of three catalytic AB heterodimers that form a heterohexamer, three peripheral stalks each consisting of EG heterodimers, one central rotor including subunits D and F, and the regulatory subunits C and H. The proton translocation complex V0 consists of the proton transport subunit a, a ring of proteolipid subunits c9c'', rotary subunit d, subunits e and f, and the accessory subunits VhaAC45 and ATP6AP2.

It carries out the reaction ATP + H2O + 4 H(+)(in) = ADP + phosphate + 5 H(+)(out). With respect to regulation, ATP hydrolysis occurs at the interface between the nucleotide-binding domains of subunits A and B. ATP hydrolysis triggers a conformational change in the subunits D and F, which induces a shift of subunit d. The c-ring is subsequently rotated and results in a continuous proton translocation across the membrane. In terms of biological role, catalytic subunit of the V1 complex of vacuolar(H+)-ATPase (V-ATPase), a multisubunit enzyme composed of a peripheral complex (V1) that hydrolyzes ATP and a membrane integral complex (V0) that translocates protons. V-ATPase is responsible for acidifying and maintaining the pH of intracellular compartments and in some cell types, is targeted to the plasma membrane, where it is responsible for acidifying the extracellular environment. This is V-type proton ATPase catalytic subunit A isoform 1 (Vha68-1) from Drosophila melanogaster (Fruit fly).